The sequence spans 91 residues: UPF0213 protein NGO_1598 (91 aa).

Residues 4 to 83 (SNWSVYLILC…AAQKRQLWEQ (80 aa)) form the GIY-YIG domain.

The protein belongs to the UPF0213 family.

The sequence is that of UPF0213 protein NGO_1598 from Neisseria gonorrhoeae (strain ATCC 700825 / FA 1090).